A 213-amino-acid polypeptide reads, in one-letter code: MIVIFLGPPGAGKGTQGKKIAKKIDLPHIAVGDIFRTIIKTSTSEAELINNYVKQGALIPNEIVNQVIKIFLLSSQYKNGYILDGYPRNLEQARFFESFIKKAQIKIIYFDVADELLIKRVLGRYSCKNCGKIYNVHFLQPKTDYVCDVCSSNVFDYRRDDNEEVIKKRIEVYKTETYPLIDYYKNSGNFYIVNASKDEQEIENDIQKILKIN.

10–15 (GAGKGT) is a binding site for ATP. The segment at 30 to 59 (AVGDIFRTIIKTSTSEAELINNYVKQGALI) is NMP. AMP-binding positions include arginine 36, 57 to 59 (ALI), 85 to 88 (GYPR), and glutamine 92. The segment at 123 to 161 (GRYSCKNCGKIYNVHFLQPKTDYVCDVCSSNVFDYRRDD) is LID. An ATP-binding site is contributed by arginine 124. Cysteine 127 and cysteine 130 together coordinate Zn(2+). 133–134 (IY) contributes to the ATP binding site. 2 residues coordinate Zn(2+): cysteine 147 and cysteine 150. Residues arginine 158 and arginine 169 each coordinate AMP. Residue lysine 197 coordinates ATP.

Belongs to the adenylate kinase family. In terms of assembly, monomer.

It is found in the cytoplasm. It carries out the reaction AMP + ATP = 2 ADP. It functions in the pathway purine metabolism; AMP biosynthesis via salvage pathway; AMP from ADP: step 1/1. In terms of biological role, catalyzes the reversible transfer of the terminal phosphate group between ATP and AMP. Plays an important role in cellular energy homeostasis and in adenine nucleotide metabolism. The chain is Adenylate kinase from Rickettsia typhi (strain ATCC VR-144 / Wilmington).